Consider the following 209-residue polypeptide: Tektin bundle-interacting protein 1 (209 aa).

As to quaternary structure, microtubule inner protein component of sperm flagellar doublet microtubules.

Its subcellular location is the cytoplasm. It is found in the cytoskeleton. The protein resides in the cilium axoneme. The protein localises to the flagellum axoneme. In terms of biological role, microtubule inner protein (MIP) part of the dynein-decorated doublet microtubules (DMTs) in cilia axoneme, which is required for motile cilia beating. Located at the center of the tektin bundle where may function to recruit tektins or stabilize the bundle. The protein is Tektin bundle-interacting protein 1 (TEKTIP1) of Macaca fascicularis (Crab-eating macaque).